The following is a 256-amino-acid chain: Biosynthetic peptidoglycan transglycosylase (256 aa).

A helical membrane pass occupies residues valine 26–tyrosine 48.

It belongs to the glycosyltransferase 51 family.

The protein localises to the cell inner membrane. It catalyses the reaction [GlcNAc-(1-&gt;4)-Mur2Ac(oyl-L-Ala-gamma-D-Glu-L-Lys-D-Ala-D-Ala)](n)-di-trans,octa-cis-undecaprenyl diphosphate + beta-D-GlcNAc-(1-&gt;4)-Mur2Ac(oyl-L-Ala-gamma-D-Glu-L-Lys-D-Ala-D-Ala)-di-trans,octa-cis-undecaprenyl diphosphate = [GlcNAc-(1-&gt;4)-Mur2Ac(oyl-L-Ala-gamma-D-Glu-L-Lys-D-Ala-D-Ala)](n+1)-di-trans,octa-cis-undecaprenyl diphosphate + di-trans,octa-cis-undecaprenyl diphosphate + H(+). The protein operates within cell wall biogenesis; peptidoglycan biosynthesis. In terms of biological role, peptidoglycan polymerase that catalyzes glycan chain elongation from lipid-linked precursors. The chain is Biosynthetic peptidoglycan transglycosylase from Burkholderia thailandensis (strain ATCC 700388 / DSM 13276 / CCUG 48851 / CIP 106301 / E264).